A 332-amino-acid chain; its full sequence is Cilia- and flagella-associated protein 119 (332 aa).

The segment covering 1 to 10 (MITPRSSQSL) has biased composition (polar residues). 3 disordered regions span residues 1–70 (MITP…ANLF), 246–271 (EDEEATVEQAATPQEEEPEAVTEAEQ), and 308–332 (RLSNRLAALERPYQTPPSKGKSKAK). Residues 14–30 (VQTELEHSPKLQEEPDR) show a composition bias toward basic and acidic residues. Residues 49–58 (ESPAEATSSP) show a composition bias toward polar residues. Positions 287–308 (LNKELRQLQQLVEERLKESEER) form a coiled coil.

As to expression, specifically expressed in testis (at protein level).

Its subcellular location is the cell projection. It localises to the cilium. The protein resides in the flagellum. It is found in the cytoplasmic vesicle. The protein localises to the secretory vesicle. Its subcellular location is the acrosome. It localises to the cytoplasm. This chain is Cilia- and flagella-associated protein 119, found in Rattus norvegicus (Rat).